The following is a 235-amino-acid chain: 2,3,4,5-tetrahydropyridine-2,6-dicarboxylate N-acetyltransferase (235 aa).

This sequence belongs to the transferase hexapeptide repeat family. DapH subfamily.

It catalyses the reaction (S)-2,3,4,5-tetrahydrodipicolinate + acetyl-CoA + H2O = L-2-acetamido-6-oxoheptanedioate + CoA. It functions in the pathway amino-acid biosynthesis; L-lysine biosynthesis via DAP pathway; LL-2,6-diaminopimelate from (S)-tetrahydrodipicolinate (acetylase route): step 1/3. Its function is as follows. Catalyzes the transfer of an acetyl group from acetyl-CoA to tetrahydrodipicolinate. The sequence is that of 2,3,4,5-tetrahydropyridine-2,6-dicarboxylate N-acetyltransferase from Exiguobacterium sp. (strain ATCC BAA-1283 / AT1b).